Reading from the N-terminus, the 118-residue chain is Actin depolymerizing factor ADF (118 aa).

Positions 4–118 constitute an ADF-H domain; it reads GMGVDENCVA…HEMGDLAPLA (115 aa).

This sequence belongs to the actin-binding proteins ADF family. In terms of assembly, interacts with ACT1 (G-actin); the interaction results in inhibition of actin polymerization. Interacts with DPA; the interaction enhances ADF activity in disassembly of filamentous actin and inhibition of actin polymerization.

The protein resides in the cytoplasm. Its function is as follows. Inhibits actin polymerization. Promotes actin depolymerization. Strongly sequesters actin monomers (G-actin). Weakly severs actin filaments (F-actin). This chain is Actin depolymerizing factor ADF, found in Toxoplasma gondii.